Reading from the N-terminus, the 164-residue chain is Phosphopantetheine adenylyltransferase (164 aa).

T14 serves as a coordination point for substrate. ATP-binding positions include 14–15 (TF) and H22. Substrate-binding residues include K46, L78, and R92. Residues 93–95 (GLR), E103, and 128–134 (HAFISST) contribute to the ATP site.

It belongs to the bacterial CoaD family. Homohexamer. It depends on Mg(2+) as a cofactor.

Its subcellular location is the cytoplasm. The catalysed reaction is (R)-4'-phosphopantetheine + ATP + H(+) = 3'-dephospho-CoA + diphosphate. The protein operates within cofactor biosynthesis; coenzyme A biosynthesis; CoA from (R)-pantothenate: step 4/5. Reversibly transfers an adenylyl group from ATP to 4'-phosphopantetheine, yielding dephospho-CoA (dPCoA) and pyrophosphate. The chain is Phosphopantetheine adenylyltransferase from Vibrio cholerae serotype O1 (strain ATCC 39541 / Classical Ogawa 395 / O395).